The following is a 597-amino-acid chain: Fructan 1-exohydrolase (597 aa).

The N-terminal stretch at 1–15 is a signal peptide; it reads MAQAWAFLLPVLVFG. D76 is a catalytic residue. N169, N237, and N249 each carry an N-linked (GlcNAc...) asparagine glycan. A disulfide bridge connects residues C447 and C493. N-linked (GlcNAc...) asparagine glycosylation occurs at N568.

The protein belongs to the glycosyl hydrolase 32 family.

The catalysed reaction is Hydrolysis of terminal, non-reducing (2-&gt;1)-linked beta-D-fructofuranose residues in fructans.. Inhibited by sucrose. In terms of biological role, hydrolyzes inulin-type beta-(2,1)-fructans. May play a role as a beta-(2,1)-trimmer during graminan biosynthesis. The polypeptide is Fructan 1-exohydrolase (Triticum urartu (Red wild einkorn)).